A 356-amino-acid polypeptide reads, in one-letter code: Glutamine synthetase cytosolic isozyme 2 (356 aa).

In terms of domain architecture, GS beta-grasp spans 19-99; that stretch reads IIAEYIWIGG…VMCDTYTPAG (81 aa). The GS catalytic domain maps to 106 to 356; the sequence is KRHNAAKIFS…IAESTILWKP (251 aa).

It belongs to the glutamine synthetase family. As to quaternary structure, homooctamer.

Its subcellular location is the cytoplasm. The enzyme catalyses L-glutamate + NH4(+) + ATP = L-glutamine + ADP + phosphate + H(+). The chain is Glutamine synthetase cytosolic isozyme 2 (GS1-2) from Vitis vinifera (Grape).